A 255-amino-acid chain; its full sequence is DNA repair protein RecO (255 aa).

This sequence belongs to the RecO family.

Its function is as follows. Involved in DNA repair and RecF pathway recombination. This chain is DNA repair protein RecO, found in Bacillus velezensis (strain DSM 23117 / BGSC 10A6 / LMG 26770 / FZB42) (Bacillus amyloliquefaciens subsp. plantarum).